The primary structure comprises 318 residues: Polyprenal reductase (318 aa).

Residues M1–A11 are Cytoplasmic-facing. A helical membrane pass occupies residues L12–L34. The Lumenal segment spans residues L35 to Y80. Residues I81–G101 traverse the membrane as a helical segment. Topologically, residues A102 to A117 are cytoplasmic. Residues A118 to L138 form a helical membrane-spanning segment. The Lumenal segment spans residues H139 to M157. Residues I158–L178 traverse the membrane as a helical segment. Over S179 to N194 the chain is Cytoplasmic. A helical transmembrane segment spans residues L195–A215. Topologically, residues H216–L260 are lumenal. A helical membrane pass occupies residues M261 to V281. Residues T282–F318 are Cytoplasmic-facing.

This sequence belongs to the steroid 5-alpha reductase family. Polyprenal reductase subfamily. In terms of tissue distribution, expressed in preadipocytes (at protein level). Overexpressed in hormone-refractory prostate cancers (HRPC). Almost no or little expression in normal adult organs.

The protein resides in the endoplasmic reticulum membrane. It carries out the reaction a di-trans,poly-cis-dolichal + NADP(+) = a di-trans,poly-cis-polyprenal + NADPH + H(+). The catalysed reaction is a 3-oxo-5alpha-steroid + NADP(+) = a 3-oxo-Delta(4)-steroid + NADPH + H(+). It catalyses the reaction androst-4-ene-3,17-dione + NADPH + H(+) = 5alpha-androstan-3,17-dione + NADP(+). The enzyme catalyses 17beta-hydroxy-5alpha-androstan-3-one + NADP(+) = testosterone + NADPH + H(+). It functions in the pathway protein modification; protein glycosylation. Its function is as follows. Plays a key role in early steps of protein N-linked glycosylation by being involved in the conversion of polyprenol into dolichol. Acts as a polyprenal reductase that mediates the reduction of polyprenal into dolichal in a NADP-dependent mechanism. Dolichols are required for the synthesis of dolichol-linked monosaccharides and the oligosaccharide precursor used for N-glycosylation. Also able to convert testosterone (T) into 5-alpha-dihydrotestosterone (DHT). This Homo sapiens (Human) protein is Polyprenal reductase.